Consider the following 233-residue polypeptide: Glucosamine-6-phosphate deaminase (233 aa).

Catalysis depends on aspartate 62, which acts as the Proton acceptor; for enolization step. The active-site For ring-opening step is the asparagine 128. Histidine 130 functions as the Proton acceptor; for ring-opening step in the catalytic mechanism. Catalysis depends on glutamate 135, which acts as the For ring-opening step.

The protein belongs to the glucosamine/galactosamine-6-phosphate isomerase family. NagB subfamily.

The catalysed reaction is alpha-D-glucosamine 6-phosphate + H2O = beta-D-fructose 6-phosphate + NH4(+). The protein operates within amino-sugar metabolism; N-acetylneuraminate degradation; D-fructose 6-phosphate from N-acetylneuraminate: step 5/5. Its function is as follows. Catalyzes the reversible isomerization-deamination of glucosamine 6-phosphate (GlcN6P) to form fructose 6-phosphate (Fru6P) and ammonium ion. The polypeptide is Glucosamine-6-phosphate deaminase (Streptococcus thermophilus (strain ATCC BAA-491 / LMD-9)).